The primary structure comprises 624 residues: Steryl-sulfatase (624 aa).

The signal sequence occupies residues 1-22 (MPRPRPLLLAVMAATLADIILA). The Lumenal portion of the chain corresponds to 24-192 (DPAPAGPAPR…GTVFGPALRV (169 aa)). 2 residues coordinate Ca(2+): Asp-43 and Asp-44. The N-linked (GlcNAc...) asparagine glycan is linked to Asn-55. Position 83 (Cys-83) interacts with Ca(2+). Cys-83 functions as the Nucleophile in the catalytic mechanism. Cys-83 carries the post-translational modification 3-oxoalanine (Cys). The active site involves His-144. 2 disulfides stabilise this stretch: Cys-149-Cys-156 and Cys-178-Cys-250. A helical membrane pass occupies residues 193 to 216 (FAAGPLAALGASLAAMAAARWAGL). Topologically, residues 217–220 (ARVP) are cytoplasmic. A helical membrane pass occupies residues 221-242 (GWALAGTAAAMLAVGGPRSASC). Topologically, residues 243 to 624 (LGFRPANCFL…ATTRTQATPR (382 aa)) are lumenal. Residues Asp-350 and His-351 each contribute to the Ca(2+) site. 2 disulfide bridges follow: Cys-454-Cys-495 and Cys-487-Cys-493. Asn-465 is a glycosylation site (N-linked (GlcNAc...) asparagine). A disordered region spans residues 572–624 (GGAGGGAGAQDDSGHAHGDGSHAHDDPGHAQDRGDDDAHYGGHATTRTQATPR). Residues 583–611 (DSGHAHGDGSHAHDDPGHAQDRGDDDAHY) are compositionally biased toward basic and acidic residues.

This sequence belongs to the sulfatase family. Homodimer. It depends on Ca(2+) as a cofactor. Post-translationally, the conversion to 3-oxoalanine (also known as C-formylglycine, FGly), of a serine or cysteine residue in prokaryotes and of a cysteine residue in eukaryotes, is critical for catalytic activity.

It localises to the microsome membrane. It is found in the endoplasmic reticulum membrane. It carries out the reaction dehydroepiandrosterone 3-sulfate + H2O = 3beta-hydroxyandrost-5-en-17-one + sulfate + H(+). The enzyme catalyses estrone 3-sulfate + H2O = estrone + sulfate + H(+). Catalyzes the conversion of sulfated steroid precursors, such as dehydroepiandrosterone sulfate (DHEA-S) and estrone sulfate to the free steroid. In Mus musculus (Mouse), this protein is Steryl-sulfatase (Sts).